A 262-amino-acid chain; its full sequence is Type III pantothenate kinase (262 aa).

7 to 14 (DIGNTRLK) contributes to the ATP binding site. Residues Tyr96 and 103–106 (GSDR) each bind substrate. Asp105 (proton acceptor) is an active-site residue. Residue Thr137 coordinates ATP. Thr187 serves as a coordination point for substrate.

It belongs to the type III pantothenate kinase family. Homodimer. The cofactor is NH4(+). K(+) serves as cofactor.

It localises to the cytoplasm. The enzyme catalyses (R)-pantothenate + ATP = (R)-4'-phosphopantothenate + ADP + H(+). It participates in cofactor biosynthesis; coenzyme A biosynthesis; CoA from (R)-pantothenate: step 1/5. In terms of biological role, catalyzes the phosphorylation of pantothenate (Pan), the first step in CoA biosynthesis. The chain is Type III pantothenate kinase from Leptothrix cholodnii (strain ATCC 51168 / LMG 8142 / SP-6) (Leptothrix discophora (strain SP-6)).